A 410-amino-acid polypeptide reads, in one-letter code: E3 ubiquitin-protein ligase ICP0 (410 aa).

The segment at 46–85 (CPICLDVAATEAQTLPCMHKFCLDCIQRWTLTSTACPLCN) adopts an RING-type zinc-finger fold. A disordered region spans residues 243–410 (TSESEAHSDS…IFIDLTQDDD (168 aa)). A compositionally biased stretch (basic residues) spans 287 to 315 (APRRSPRRARRAAVLRREQRRTRCLRRGR). Composition is skewed to low complexity over residues 329–340 (SSGEGSSAQHGA) and 348–399 (GSAN…PRSA).

In terms of processing, auto-ubiquitinated.

The enzyme catalyses S-ubiquitinyl-[E2 ubiquitin-conjugating enzyme]-L-cysteine + [acceptor protein]-L-lysine = [E2 ubiquitin-conjugating enzyme]-L-cysteine + N(6)-ubiquitinyl-[acceptor protein]-L-lysine.. In terms of biological role, evades nuclear antiviral defenses triggered by dsDNA viruses. Acts during the initial stages of lytic infection and the reactivation of latent viral genome. Prevents the antiviral effect of nuclear bodies by degrading host PML and SP100. This chain is E3 ubiquitin-protein ligase ICP0 (EP0), found in Sus scrofa (Pig).